The following is a 359-amino-acid chain: MKLKQIELKNFRNYEDLKLDFHPNLNIFLGQNAQGKTNILEAIHFLALTRSHRTSHDKELIRWSGQEMKVSGLVEKAHATVPLEVQLSSKGRIAKANHLKENRLADYIGQLKILMFAPENLELVKGSPATRRRFMDIELGQIHAVYLYDSMRYNRALKERNAYLKFDQAKIDKNFLTVLDEQLAEHGNKIMFERKTFIEKLEIHAKKIHEQLTHGLETLKITYNQNVKTDFSKELLSRQDHDIFRHQTTVGPHRDDLQFFINDINVADFGSQGQQRTVALSIKLAEIDLIFEETGEYPILLLDDVMSELDNHRQLDLIETSLGKTQTFITTTTLDHLKNLPENLSIFHVTDGTIEKEKE.

30-37 contributes to the ATP binding site; it reads GQNAQGKT.

Belongs to the RecF family.

It localises to the cytoplasm. The RecF protein is involved in DNA metabolism; it is required for DNA replication and normal SOS inducibility. RecF binds preferentially to single-stranded, linear DNA. It also seems to bind ATP. The polypeptide is DNA replication and repair protein RecF (Lactococcus lactis subsp. cremoris (strain MG1363)).